Here is a 286-residue protein sequence, read N- to C-terminus: Secretory carrier-associated membrane protein 2 (286 aa).

Composition is skewed to basic and acidic residues over residues 1–10 (MAGRYDRNPF) and 54–63 (STKDMKKKEK). The tract at residues 1–63 (MAGRYDRNPF…STKDMKKKEK (63 aa)) is disordered. The Cytoplasmic segment spans residues 1 to 126 (MAGRYDRNPF…LQRMQYLAFS (126 aa)). The stretch at 52–89 (LDSTKDMKKKEKELQAKEAELNKRESELRRREEAASRA) forms a coiled coil. A run of 4 helical transmembrane segments spans residues 127–147 (SLLGLAACLFWNIIATTAAWI), 152–172 (VMIWLLAIIYFISGVPGAYVL), 189–209 (FGWFFLFYLIHILFCIWSAVA), and 237–257 (IFYFIGFGLFCLESLLSVVVI). Residues 258-286 (QQVYMYFRGSGKAAEMKREAARGAMRSAF) lie on the Cytoplasmic side of the membrane.

It belongs to the SCAMP family.

Its subcellular location is the cell membrane. It is found in the cytoplasmic vesicle. The protein resides in the secretory vesicle membrane. Functionally, probably involved in membrane trafficking. This Oryza sativa subsp. japonica (Rice) protein is Secretory carrier-associated membrane protein 2 (SCAMP2).